The primary structure comprises 1583 residues: Protein mesh (1583 aa).

Residues 1 to 21 form the signal peptide; it reads MGVKIKLVLAVVLILSANVLG. Residues 22–1182 lie on the Extracellular side of the membrane; it reads QDEIVNDTES…EFSQRALFLT (1161 aa). The NIDO domain maps to 260–415; it reads GIYFRLDRDL…GRHIFRIDEN (156 aa). In terms of domain architecture, AMOP spans 647 to 798; it reads GQRWSNSMCN…VGCETFRFER (152 aa). The 209-residue stretch at 811-1019 folds into the VWFD domain; that stretch reads GVAGIFGDPH…HWQLTDREQR (209 aa). In terms of domain architecture, Sushi spans 1110-1170; sequence ISCGILETPR…PDYGYTECLR (61 aa). Intrachain disulfides connect Cys-1112–Cys-1152 and Cys-1138–Cys-1168. A helical transmembrane segment spans residues 1183-1203; it reads WGVIVAVILPLGLLICLLWFW. The Cytoplasmic segment spans residues 1204-1472; sequence CWHKPRSEGK…QEYSSRTLGA (269 aa). Positions 1232–1250 are enriched in polar residues; it reads LRSSSMGNITDTMKSSTIP. Positions 1232–1448 are disordered; that stretch reads LRSSSMGNIT…IPEAPKSAPV (217 aa). Residues 1291–1300 are compositionally biased toward basic and acidic residues; it reads GKSDSGKSDK. Residues 1405–1416 show a composition bias toward polar residues; the sequence is PIPSQYSPTYSE. A helical membrane pass occupies residues 1473–1493; sequence TWGIISAVMLPIIIILICVAW. At 1494 to 1583 the chain is on the extracellular side; it reads RILQRRKAEE…RQWGGETEIN (90 aa). The segment covering 1521–1539 has biased composition (basic and acidic residues); sequence DSVKVTSDDESIPYKKDVT. A disordered region spans residues 1521-1583; sequence DSVKVTSDDE…RQWGGETEIN (63 aa).

In fifth instar larvae, expressed in midgut epithelial cells (at protein level).

The protein localises to the membrane. It localises to the cell junction. Its subcellular location is the septate junction. The protein resides in the lateral cell membrane. Functionally, may be required for the proper organization of smooth septate junctions and for the barrier function of the midgut epithelium. This Bombyx mori (Silk moth) protein is Protein mesh.